A 116-amino-acid chain; its full sequence is ATP-dependent Clp protease adapter protein ClpS (116 aa).

Over residues 1 to 11 the composition is skewed to polar residues; that stretch reads MRRINTIMQGK. The tract at residues 1-23 is disordered; the sequence is MRRINTIMQGKTNGGNGPESGTV.

Belongs to the ClpS family. Binds to the N-terminal domain of the chaperone ClpA.

In terms of biological role, involved in the modulation of the specificity of the ClpAP-mediated ATP-dependent protein degradation. The sequence is that of ATP-dependent Clp protease adapter protein ClpS from Brucella abortus (strain S19).